The primary structure comprises 874 residues: Alanine--tRNA ligase (874 aa).

Positions 562, 566, 663, and 667 each coordinate Zn(2+).

Belongs to the class-II aminoacyl-tRNA synthetase family. Zn(2+) is required as a cofactor.

Its subcellular location is the cytoplasm. It catalyses the reaction tRNA(Ala) + L-alanine + ATP = L-alanyl-tRNA(Ala) + AMP + diphosphate. Catalyzes the attachment of alanine to tRNA(Ala) in a two-step reaction: alanine is first activated by ATP to form Ala-AMP and then transferred to the acceptor end of tRNA(Ala). Also edits incorrectly charged Ser-tRNA(Ala) and Gly-tRNA(Ala) via its editing domain. The sequence is that of Alanine--tRNA ligase from Bordetella pertussis (strain Tohama I / ATCC BAA-589 / NCTC 13251).